The primary structure comprises 285 residues: Putative quercetin 2,3-dioxygenase PA3240 (285 aa).

The a divalent metal cation site is built by H60, H62, H104, and E106.

The protein belongs to the pirin family. The cofactor is a divalent metal cation.

The enzyme catalyses quercetin + O2 = 2-(3,4-dihydroxybenzoyloxy)-4,6-dihydroxybenzoate + CO. It participates in flavonoid metabolism; quercetin degradation. Functionally, putative quercetin 2,3-dioxygenase. This chain is Putative quercetin 2,3-dioxygenase PA3240, found in Pseudomonas aeruginosa (strain ATCC 15692 / DSM 22644 / CIP 104116 / JCM 14847 / LMG 12228 / 1C / PRS 101 / PAO1).